Here is a 273-residue protein sequence, read N- to C-terminus: Type IV secretion system protein PtlF (273 aa).

Positions 1–20 (MMAARMMAAGLAATALSAHA) are cleaved as a signal peptide.

This sequence belongs to the TrbG/VirB9 family. As to quaternary structure, forms a complex with PtlI.

The protein resides in the cell outer membrane. Component of the type IV secretion system ptl required for secretion of assembled pertussis toxin (PTX) through the outer membrane. This is Type IV secretion system protein PtlF (ptlF) from Bordetella pertussis (strain Tohama I / ATCC BAA-589 / NCTC 13251).